A 579-amino-acid polypeptide reads, in one-letter code: Membrane protein insertase YidC (579 aa).

Residues 10–30 (LVIVTILSALILFGWSFVTKH) traverse the membrane as a helical segment. The tract at residues 35-61 (PPAPTQQGKNQPKAELTAEESGDKPLK) is disordered. Transmembrane regions (helical) follow at residues 330 to 350 (FDKA…FYYL), 351 to 371 (DWLF…VFTI), 423 to 443 (VNPF…IALY), 478 to 498 (LLHF…ILGI), and 523 to 543 (PLIS…YYIF). A compositionally biased stretch (basic and acidic residues) spans 560 to 572 (STPEERQDRAERK). Residues 560–579 (STPEERQDRAERKRPSKKKA) form a disordered region.

Belongs to the OXA1/ALB3/YidC family. Type 1 subfamily. As to quaternary structure, interacts with the Sec translocase complex via SecD. Specifically interacts with transmembrane segments of nascent integral membrane proteins during membrane integration.

It localises to the cell inner membrane. Functionally, required for the insertion and/or proper folding and/or complex formation of integral membrane proteins into the membrane. Involved in integration of membrane proteins that insert both dependently and independently of the Sec translocase complex, as well as at least some lipoproteins. Aids folding of multispanning membrane proteins. The polypeptide is Membrane protein insertase YidC (Zymomonas mobilis subsp. mobilis (strain ATCC 31821 / ZM4 / CP4)).